Consider the following 385-residue polypeptide: Protein pelota homolog (385 aa).

Belongs to the eukaryotic release factor 1 family. Pelota subfamily. In terms of assembly, component of the Pelota-HBS1L complex, also named Dom34-Hbs1 complex, composed of PELO and HBS1L. Requires a divalent metal cation as cofactor.

Its subcellular location is the cytoplasm. Component of the Pelota-HBS1L complex, a complex that recognizes stalled ribosomes and triggers the No-Go Decay (NGD) pathway. In the Pelota-HBS1L complex, PELO recognizes ribosomes stalled at the 3' end of an mRNA and engages stalled ribosomes by destabilizing mRNA in the mRNA channel. Following mRNA extraction from stalled ribosomes by the SKI complex, the Pelota-HBS1L complex promotes recruitment of ABCE1, which drives the disassembly of stalled ribosomes, followed by degradation of damaged mRNAs as part of the NGD pathway. The chain is Protein pelota homolog (PELO) from Gallus gallus (Chicken).